Consider the following 248-residue polypeptide: Cobalt transport protein CbiM (248 aa).

The N-terminal stretch at 1-31 (MLKVIKKYRKFITFLMIGLVYTLAYPATAHA) is a signal peptide. Helical transmembrane passes span 39-59 (LPPR…IYGL), 75-95 (VMLA…LPSV), 107-127 (LGTV…VLLF), 139-159 (TLGA…YAVW), 173-195 (LFLC…LAIV), and 213-233 (IYAI…VIVY).

This sequence belongs to the CbiM family. In terms of assembly, forms an energy-coupling factor (ECF) transporter complex composed of an ATP-binding protein (A component, CbiO), a transmembrane protein (T component, CbiQ) and 2 possible substrate-capture proteins (S components, CbiM and CbiN) of unknown stoichimetry.

The protein localises to the cell membrane. It participates in cofactor biosynthesis; adenosylcobalamin biosynthesis. In terms of biological role, part of the energy-coupling factor (ECF) transporter complex CbiMNOQ involved in cobalt import. The protein is Cobalt transport protein CbiM of Limosilactobacillus reuteri (strain DSM 20016) (Lactobacillus reuteri).